The sequence spans 131 residues: Small ribosomal subunit protein uS8 (131 aa).

Belongs to the universal ribosomal protein uS8 family. As to quaternary structure, part of the 30S ribosomal subunit. Contacts proteins S5 and S12.

In terms of biological role, one of the primary rRNA binding proteins, it binds directly to 16S rRNA central domain where it helps coordinate assembly of the platform of the 30S subunit. The protein is Small ribosomal subunit protein uS8 of Janthinobacterium sp. (strain Marseille) (Minibacterium massiliensis).